The sequence spans 488 residues: Fumarate hydratase (488 aa).

The (S)-malate site is built by serine 105, serine 147, asparagine 148, threonine 194, and histidine 195. Histidine 195 acts as the Proton donor/acceptor in catalysis. Residue serine 340 is part of the active site. The (S)-malate site is built by serine 341, lysine 346, and asparagine 348.

Belongs to the class-II fumarase/aspartase family. Fumarase subfamily. Homotetramer.

Its subcellular location is the cytoplasm. It localises to the cytosol. It catalyses the reaction (S)-malate = fumarate + H2O. Functionally, catalyzes the reversible stereospecific interconversion of fumarate to L-malate. Fumarate metabolism in the cytosol plays a role during urea cycle and arginine metabolism; fumarate being a by-product of the urea cycle and amino-acid catabolism. This chain is Fumarate hydratase, found in Schistosoma mansoni (Blood fluke).